The primary structure comprises 233 residues: Putative cobalt transport protein CbiM (233 aa).

6 helical membrane passes run 9–29 (PPMW…YGIV), 43–63 (PLVA…MPSV), 75–95 (LGAV…VLLF), 107–127 (TLGA…VIVY), 138–158 (TVGI…TTAV), and 177–197 (IVIY…LTVI).

This sequence belongs to the CbiM family. In terms of assembly, forms an energy-coupling factor (ECF) transporter complex composed of an ATP-binding protein (A component, CbiO), a transmembrane protein (T component, CbiQ) and 2 possible substrate-capture proteins (S components, CbiM and CbiN) of unknown stoichimetry.

The protein localises to the cell membrane. Its pathway is cofactor biosynthesis; adenosylcobalamin biosynthesis. Functionally, part of the energy-coupling factor (ECF) transporter complex CbiMNOQ involved in cobalt import. The chain is Putative cobalt transport protein CbiM from Methanocaldococcus jannaschii (strain ATCC 43067 / DSM 2661 / JAL-1 / JCM 10045 / NBRC 100440) (Methanococcus jannaschii).